Reading from the N-terminus, the 265-residue chain is Tryptophan synthase alpha chain (265 aa).

Catalysis depends on proton acceptor residues glutamate 49 and aspartate 60.

Belongs to the TrpA family. As to quaternary structure, tetramer of two alpha and two beta chains.

The enzyme catalyses (1S,2R)-1-C-(indol-3-yl)glycerol 3-phosphate + L-serine = D-glyceraldehyde 3-phosphate + L-tryptophan + H2O. It functions in the pathway amino-acid biosynthesis; L-tryptophan biosynthesis; L-tryptophan from chorismate: step 5/5. Its function is as follows. The alpha subunit is responsible for the aldol cleavage of indoleglycerol phosphate to indole and glyceraldehyde 3-phosphate. This chain is Tryptophan synthase alpha chain, found in Polynucleobacter asymbioticus (strain DSM 18221 / CIP 109841 / QLW-P1DMWA-1) (Polynucleobacter necessarius subsp. asymbioticus).